Reading from the N-terminus, the 438-residue chain is Serine hydroxymethyltransferase (438 aa).

Residues Leu135 and 139-141 (GHL) each bind (6S)-5,6,7,8-tetrahydrofolate. Lys244 bears the N6-(pyridoxal phosphate)lysine mark. The segment at 361–383 (GVPNDPLPPVKTSGIRVGSPAGT) is disordered.

It belongs to the SHMT family. In terms of assembly, homodimer. Pyridoxal 5'-phosphate serves as cofactor.

Its subcellular location is the cytoplasm. It carries out the reaction (6R)-5,10-methylene-5,6,7,8-tetrahydrofolate + glycine + H2O = (6S)-5,6,7,8-tetrahydrofolate + L-serine. The protein operates within one-carbon metabolism; tetrahydrofolate interconversion. Its pathway is amino-acid biosynthesis; glycine biosynthesis; glycine from L-serine: step 1/1. In terms of biological role, catalyzes the reversible interconversion of serine and glycine with tetrahydrofolate (THF) serving as the one-carbon carrier. This reaction serves as the major source of one-carbon groups required for the biosynthesis of purines, thymidylate, methionine, and other important biomolecules. Also exhibits THF-independent aldolase activity toward beta-hydroxyamino acids, producing glycine and aldehydes, via a retro-aldol mechanism. This is Serine hydroxymethyltransferase from Rhizorhabdus wittichii (strain DSM 6014 / CCUG 31198 / JCM 15750 / NBRC 105917 / EY 4224 / RW1) (Sphingomonas wittichii).